The primary structure comprises 740 residues: Alpha-1,6-mannosylglycoprotein 6-beta-N-acetylglucosaminyltransferase A (740 aa).

Residues Met-1–Lys-13 are Cytoplasmic-facing. The helical; Signal-anchor for type II membrane protein transmembrane segment at Leu-14–Leu-30 threads the bilayer. Residues His-31–Leu-740 are Lumenal-facing. Residues Asn-109, Asn-114, and Asn-117 are each glycosylated (N-linked (GlcNAc...) asparagine). Disulfide bonds link Cys-144–Cys-182, Cys-155–Cys-195, Cys-171–Cys-337, Cys-371–Cys-625, Cys-648–Cys-723, Cys-652–Cys-725, Cys-659–Cys-712, Cys-680–Cys-701, and Cys-736–Cys-739. Positions Asn-212–Leu-740 are sufficient for catalytic activity. An N-linked (GlcNAc...) asparagine glycan is attached at Asn-333. Asp-377–Ser-378 provides a ligand contact to substrate. N-linked (GlcNAc...) asparagine glycans are attached at residues Asn-432 and Asn-446. Glu-525 serves as a coordination point for UDP-N-acetyl-alpha-D-glucosamine. Position 553 (Lys-553) interacts with substrate.

It belongs to the glycosyltransferase 18 family. N-glycosylated. Post-translationally, a secreted form is released from the membrane after cleavage by gamma-secretase. Detected in kidney (at protein level). Detected in kidney.

The protein localises to the golgi apparatus membrane. It localises to the secreted. It carries out the reaction N(4)-{beta-D-GlcNAc-(1-&gt;2)-[beta-D-GlcNAc-(1-&gt;4)]-alpha-D-Man-(1-&gt;3)-[beta-D-GlcNAc-(1-&gt;2)-alpha-D-Man-(1-&gt;6)]-beta-D-Man-(1-&gt;4)-beta-D-GlcNAc-(1-&gt;4)-beta-D-GlcNAc}-L-asparaginyl-[protein] + UDP-N-acetyl-alpha-D-glucosamine = N(4)-{beta-D-GlcNAc-(1-&gt;2)-[beta-D-GlcNAc-(1-&gt;4)]-alpha-D-Man-(1-&gt;3)-[beta-D-GlcNAc-(1-&gt;2)-[beta-D-GlcNAc-(1-&gt;6)]-alpha-D-Man-(1-&gt;6)]-beta-D-Man-(1-&gt;4)-beta-D-GlcNAc-(1-&gt;4)-beta-D-GlcNAc}-L-asparaginyl-[protein] + UDP + H(+). It participates in protein modification; protein glycosylation. Its function is as follows. Catalyzes the addition of N-acetylglucosamine (GlcNAc) in beta 1-6 linkage to the alpha-linked mannose of biantennary N-linked oligosaccharides. Catalyzes an important step in the biosynthesis of branched, complex-type N-glycans, such as those found on EGFR, TGFR (TGF-beta receptor) and CDH2. Via its role in the biosynthesis of complex N-glycans, plays an important role in the activation of cellular signaling pathways, reorganization of the actin cytoskeleton, cell-cell adhesion and cell migration. MGAT5-dependent EGFR N-glycosylation enhances the interaction between EGFR and LGALS3 and thereby prevents rapid EGFR endocytosis and prolongs EGFR signaling. Required for efficient interaction between TGFB1 and its receptor. Enhances activation of intracellular signaling pathways by several types of growth factors, including FGF2, PDGF, IGF, TGFB1 and EGF. MGAT5-dependent CDH2 N-glycosylation inhibits CDH2-mediated homotypic cell-cell adhesion and contributes to the regulation of downstream signaling pathways. Promotes cell migration. Contributes to the regulation of the inflammatory response. MGAT5-dependent TCR N-glycosylation enhances the interaction between TCR and LGALS3, limits agonist-induced TCR clustering, and thereby dampens TCR-mediated responses to antigens. Required for normal leukocyte evasation and accumulation at sites of inflammation. Inhibits attachment of monocytes to the vascular endothelium and subsequent monocyte diapedesis. Promotes proliferation of umbilical vein endothelial cells and angiogenesis, at least in part by promoting the release of the growth factor FGF2 from the extracellular matrix. The polypeptide is Alpha-1,6-mannosylglycoprotein 6-beta-N-acetylglucosaminyltransferase A (Mgat5) (Rattus norvegicus (Rat)).